A 204-amino-acid polypeptide reads, in one-letter code: Transcriptional regulator GfcR (204 aa).

The protein belongs to the purine/pyrimidine phosphoribosyltransferase family. GfcR subfamily.

This chain is Transcriptional regulator GfcR, found in Methanoculleus marisnigri (strain ATCC 35101 / DSM 1498 / JR1).